A 783-amino-acid polypeptide reads, in one-letter code: Tricorn protease-interacting factor F2 (783 aa).

Residues E107 and 236-240 (GAMEN) contribute to the substrate site. H271 provides a ligand contact to Zn(2+). E272 (proton acceptor) is an active-site residue. Zn(2+) contacts are provided by H275 and E294.

The protein belongs to the peptidase M1 family. Monomer. Part of the Tricorn proteolytic complex. Zn(2+) is required as a cofactor.

It is found in the cytoplasm. In terms of biological role, proteases F1, F2 and F3 degrade oligopeptides produced by Tricorn (themselves probably produced by the proteasome), yielding free amino acids. This is Tricorn protease-interacting factor F2 (trf2) from Thermoplasma acidophilum (strain ATCC 25905 / DSM 1728 / JCM 9062 / NBRC 15155 / AMRC-C165).